A 265-amino-acid chain; its full sequence is Putative cysteine-rich receptor-like protein kinase 9 (265 aa).

An N-terminal signal peptide occupies residues 1–23; the sequence is MSSLISFIFLFLFSFLTSFKASA. 2 Gnk2-homologous domains span residues 27-131 and 142-244; these read FYLN…DKNI and FILS…LYSF. Asn-35, Asn-60, Asn-69, Asn-153, Asn-177, and Asn-246 each carry an N-linked (GlcNAc...) asparagine glycan.

Belongs to the protein kinase superfamily. Ser/Thr protein kinase family. CRK subfamily.

The protein resides in the secreted. The protein is Putative cysteine-rich receptor-like protein kinase 9 (CRK9) of Arabidopsis thaliana (Mouse-ear cress).